Consider the following 398-residue polypeptide: Enoyl-[acyl-carrier-protein] reductase [NADH] (398 aa).

NAD(+) contacts are provided by residues G48–Y53, F74–E75, D111–G112, and L139–A140. Y225 provides a ligand contact to substrate. The active-site Proton donor is the Y235. NAD(+) is bound by residues K244 and V273–T275.

Belongs to the TER reductase family. Monomer.

The catalysed reaction is a 2,3-saturated acyl-[ACP] + NAD(+) = a (2E)-enoyl-[ACP] + NADH + H(+). It functions in the pathway lipid metabolism; fatty acid biosynthesis. Its function is as follows. Involved in the final reduction of the elongation cycle of fatty acid synthesis (FAS II). Catalyzes the reduction of a carbon-carbon double bond in an enoyl moiety that is covalently linked to an acyl carrier protein (ACP). The protein is Enoyl-[acyl-carrier-protein] reductase [NADH] of Variovorax paradoxus (strain S110).